A 647-amino-acid chain; its full sequence is 1-deoxy-D-xylulose-5-phosphate synthase (647 aa).

Thiamine diphosphate-binding positions include histidine 72 and 113-115 (GHA). Residue aspartate 144 participates in Mg(2+) binding. Thiamine diphosphate-binding positions include 145 to 146 (GA), asparagine 174, tyrosine 287, and glutamate 370. Asparagine 174 is a binding site for Mg(2+).

It belongs to the transketolase family. DXPS subfamily. In terms of assembly, homodimer. Mg(2+) serves as cofactor. Thiamine diphosphate is required as a cofactor.

The catalysed reaction is D-glyceraldehyde 3-phosphate + pyruvate + H(+) = 1-deoxy-D-xylulose 5-phosphate + CO2. Its pathway is metabolic intermediate biosynthesis; 1-deoxy-D-xylulose 5-phosphate biosynthesis; 1-deoxy-D-xylulose 5-phosphate from D-glyceraldehyde 3-phosphate and pyruvate: step 1/1. Catalyzes the acyloin condensation reaction between C atoms 2 and 3 of pyruvate and glyceraldehyde 3-phosphate to yield 1-deoxy-D-xylulose-5-phosphate (DXP). This is 1-deoxy-D-xylulose-5-phosphate synthase from Synechococcus sp. (strain WH7803).